The primary structure comprises 249 residues: Vitamin B12 import ATP-binding protein BtuD (249 aa).

Positions 5–233 (MQLQDVAETT…PNLAQAYGMN (229 aa)) constitute an ABC transporter domain. 33-40 (GPNGAGKS) contributes to the ATP binding site.

It belongs to the ABC transporter superfamily. Vitamin B12 importer (TC 3.A.1.13.1) family. The complex is composed of two ATP-binding proteins (BtuD), two transmembrane proteins (BtuC) and a solute-binding protein (BtuF).

The protein localises to the cell inner membrane. The catalysed reaction is an R-cob(III)alamin(out) + ATP + H2O = an R-cob(III)alamin(in) + ADP + phosphate + H(+). Functionally, part of the ABC transporter complex BtuCDF involved in vitamin B12 import. Responsible for energy coupling to the transport system. This chain is Vitamin B12 import ATP-binding protein BtuD, found in Citrobacter koseri (strain ATCC BAA-895 / CDC 4225-83 / SGSC4696).